An 899-amino-acid polypeptide reads, in one-letter code: Nuclear factor NF-kappa-B p100 subunit (899 aa).

2 positions are modified to phosphoserine: serine 23 and serine 161. The 190-residue stretch at 35–224 (ADGPYLVIVE…QPIHDSKSPG (190 aa)) folds into the RHD domain. The Nuclear localization signal motif lies at 337-341 (RKRRK). The tract at residues 346–377 (FSQPFGGGSHMGGGSGGSAGGYGGAGGGGSLG) is GRR. The tract at residues 403 to 434 (GGAQMAGSRRDTDAGEGAEEPRTPPEAPQGEP) is disordered. Residues 410-425 (SRRDTDAGEGAEEPRT) are compositionally biased toward basic and acidic residues. Threonine 425 bears the Phosphothreonine mark. ANK repeat units follow at residues 487-516 (NGDT…HAQY), 526-555 (LHQT…DPTL), 559-590 (HGDS…HAVP), 599-628 (EGLY…EVEA), 633-663 (GGRT…NVNA), and 667-696 (AGNT…DIHA). A disordered region spans residues 698–734 (NEEPLCPLPSPSTSGSDSDSEGPERDTQRNFRGHTPL). Phosphoserine occurs at positions 713, 715, and 717. Residues 729-755 (RGHTPLDLTCSTKVKTLLLNAAQNTTE) form an ANK 7 repeat. One can recognise a Death domain in the interval 764–851 (AGPGLSLGDA…EGVRLLKGPE (88 aa)). Serine 812 carries the phosphoserine modification. Residues 851–865 (ETRDKLPSTEVKEDS) are compositionally biased toward basic and acidic residues. The disordered stretch occupies residues 851 to 899 (ETRDKLPSTEVKEDSAYGSQSVEQEAEKLCPPPEPPGGLCHGHPQPQVH). Lysine 855 is covalently cross-linked (Glycyl lysine isopeptide (Lys-Gly) (interchain with G-Cter in ubiquitin)). A phosphoserine; by MAP3K14 mark is found at serine 865 and serine 869. The segment covering 887-899 (GGLCHGHPQPQVH) has biased composition (low complexity).

Component of the NF-kappa-B RelB-p52 complex. Homodimer; component of the NF-kappa-B p52-p52 complex. Component of the NF-kappa-B p65-p52 complex. Component of the NF-kappa-B p52-c-Rel complex. NFKB2/p52 interacts with NFKBIE. Component of a complex consisting of the NF-kappa-B p50-p50 homodimer and BCL3. Directly interacts with MEN1. In terms of processing, while translation occurs, the particular unfolded structure after the GRR repeat promotes the generation of p52 making it an acceptable substrate for the proteasome. This process is known as cotranslational processing. The processed form is active and the unprocessed form acts as an inhibitor (I kappa B-like), being able to form cytosolic complexes with NF-kappa B, trapping it in the cytoplasm. Complete folding of the region downstream of the GRR repeat precludes processing. Subsequent to MAP3K14-dependent serine phosphorylation, p100 polyubiquitination occurs then triggering its proteasome-dependent processing. Post-translationally, constitutive processing is tightly suppressed by its C-terminal processing inhibitory domain, named PID, which contains the death domain. In terms of processing, ubiquitinated by TRIM55; leading to processing by VCP and subsequent ubiquitin-dependent protein degradation by the proteasome. As to expression, highly expressed in lymph nodes and thymus.

It is found in the nucleus. The protein localises to the cytoplasm. Its function is as follows. NF-kappa-B is a pleiotropic transcription factor present in almost all cell types and is the endpoint of a series of signal transduction events that are initiated by a vast array of stimuli related to many biological processes such as inflammation, immunity, differentiation, cell growth, tumorigenesis and apoptosis. NF-kappa-B is a homo- or heterodimeric complex formed by the Rel-like domain-containing proteins RELA/p65, RELB, NFKB1/p105, NFKB1/p50, REL and NFKB2/p52. The dimers bind at kappa-B sites in the DNA of their target genes and the individual dimers have distinct preferences for different kappa-B sites that they can bind with distinguishable affinity and specificity. Different dimer combinations act as transcriptional activators or repressors, respectively. NF-kappa-B is controlled by various mechanisms of post-translational modification and subcellular compartmentalization as well as by interactions with other cofactors or corepressors. NF-kappa-B complexes are held in the cytoplasm in an inactive state complexed with members of the NF-kappa-B inhibitor (I-kappa-B) family. In a conventional activation pathway, I-kappa-B is phosphorylated by I-kappa-B kinases (IKKs) in response to different activators, subsequently degraded thus liberating the active NF-kappa-B complex which translocates to the nucleus. In a non-canonical activation pathway, the MAP3K14-activated CHUK/IKKA homodimer phosphorylates NFKB2/p100 associated with RelB, inducing its proteolytic processing to NFKB2/p52 and the formation of NF-kappa-B RelB-p52 complexes. The NF-kappa-B heterodimeric RelB-p52 complex is a transcriptional activator. The NF-kappa-B p52-p52 homodimer is a transcriptional repressor. NFKB2 appears to have dual functions such as cytoplasmic retention of attached NF-kappa-B proteins by p100 and generation of p52 by a cotranslational processing. The proteasome-mediated process ensures the production of both p52 and p100 and preserves their independent function. p52 binds to the kappa-B consensus sequence 5'-GGRNNYYCC-3', located in the enhancer region of genes involved in immune response and acute phase reactions. p52 and p100 are respectively the minor and major form; the processing of p100 being relatively poor. Isoform p49 is a subunit of the NF-kappa-B protein complex, which stimulates the HIV enhancer in synergy with p65. In concert with RELB, regulates the circadian clock by repressing the transcriptional activator activity of the CLOCK-BMAL1 heterodimer. The protein is Nuclear factor NF-kappa-B p100 subunit (Nfkb2) of Mus musculus (Mouse).